Consider the following 320-residue polypeptide: MGSFDLQSITSEPVLLLGLAAFALLLTALPWCFWAVSNGRSSSGVRSLLGLSNLLLTAQLVLRWWQSGHFPISNLYESLCFLAWACTLTQLLVERQWPSPLVAASATPMGLGCIAFASFALPDQLQQASPLVPALRSSWLVMHVSVIMVSYAALLVGSLLSVAVLMTDRGQQLELRSSSIGSGAFRKAVSITGETSAVGVQAAPELQLSSIDFSRSEQLDSLSYRTITVGFLLLTVGIISGAVWANEAWGSWWSWDPKETWALICWLVYAAYLHTRLSRGWQGRRPAMVASLGLVVIVVCYIGVNLLGIGLHSYGWFFDA.

7 helical membrane-spanning segments follow: residues 14–34, 68–88, 101–121, 146–166, 226–246, 260–277, and 289–309; these read VLLL…WCFW, GHFP…ACTL, LVAA…SFAL, VIMV…AVLM, TITV…VWAN, TWAL…HTRL, and VASL…LLGI.

Belongs to the CcmF/CycK/Ccl1/NrfE/CcsA family. May interact with ccs1.

The protein localises to the cellular thylakoid membrane. Functionally, required during biogenesis of c-type cytochromes (cytochrome c6 and cytochrome f) at the step of heme attachment. In Synechococcus sp. (strain WH7803), this protein is Cytochrome c biogenesis protein CcsA.